The sequence spans 134 residues: Ribonuclease VapC11 (134 aa).

Positions 2–126 (ILIDTSAWVE…ADFDVIARIT (125 aa)) constitute a PINc domain. The Mg(2+) site is built by D5 and D98.

Belongs to the PINc/VapC protein family. Mg(2+) is required as a cofactor.

Its function is as follows. Toxic component of a type II toxin-antitoxin (TA) system. Acts as an RNase. Its toxic effects on cell growth and colony formation are neutralized by coexpression with cognate antitoxin VapB11. The polypeptide is Ribonuclease VapC11 (Mycobacterium tuberculosis (strain CDC 1551 / Oshkosh)).